A 181-amino-acid polypeptide reads, in one-letter code: Translation initiation factor IF-3 (181 aa).

This sequence belongs to the IF-3 family. As to quaternary structure, monomer.

It localises to the cytoplasm. IF-3 binds to the 30S ribosomal subunit and shifts the equilibrium between 70S ribosomes and their 50S and 30S subunits in favor of the free subunits, thus enhancing the availability of 30S subunits on which protein synthesis initiation begins. This Azotobacter vinelandii protein is Translation initiation factor IF-3.